A 1232-amino-acid polypeptide reads, in one-letter code: Nitrate reductase alpha subunit (1232 aa).

One can recognise a 4Fe-4S Mo/W bis-MGD-type domain in the interval 53–117; it reads DKVVRSTHGV…SFSWYSYSPT (65 aa). 4 residues coordinate [4Fe-4S] cluster: His-60, Cys-64, Cys-68, and Cys-103. Asp-233 is a Mo-bis(molybdopterin guanine dinucleotide) binding site.

It belongs to the prokaryotic molybdopterin-containing oxidoreductase family. It depends on [4Fe-4S] cluster as a cofactor. Mo-bis(molybdopterin guanine dinucleotide) is required as a cofactor.

It localises to the cell membrane. The catalysed reaction is nitrate + a quinol = a quinone + nitrite + H2O. Functionally, the alpha chain is the actual site of nitrate reduction. This is Nitrate reductase alpha subunit (narG) from Mycobacterium tuberculosis (strain CDC 1551 / Oshkosh).